The primary structure comprises 494 residues: MEHHAVEFTAQHLIALLPLLVTCMSAIVVMLAIAARRNHALTFVLTVLGLNLALLSLLPAMGVAPLEVTALLQIDRFAGYYMALVLAASLACVTLTHAYLGGQSGKGYPGNREELYLLILLSAAGGLVLASAQHLVGLFIGLELLSVPTYGMIAYAFFNKRSLEAGIKYMVLSAAGSAFLLFGMALLYAEAGDMGFRAIGASLAQGSSLLVELGIGMMLIGLAFKLSLVPFHLWTPDVYEGAPAPVAAFLATASKVAVFAVLLRLYQISPATAGGWLNELLTLIAIASILFGNLLALLQNNLKRLLGYSSIAHFGYLLVALIASQGLAVEAIGVYLATYVLTSLGAFGVITLMSTPYSGRDADALYEYRGLFWRRPYLTAVLTVMMLSLAGIPLTAGFIGKFYVIAAGVEAQLWWLLGAMVLGSAIGVFYYLRVMVTLFMREPNLHRHDAPFDWGQRAGGIMLLVVALLAFFLGVYPQPLLELVHNAALVALAQ.

Transmembrane regions (helical) follow at residues 13-33, 43-63, 82-102, 117-137, 138-158, 169-189, 209-229, 243-263, 277-297, 311-331, 332-352, 380-400, 412-432, and 461-481; these read LIAL…MLAI, FVLT…AMGV, MALV…YLGG, LLIL…HLVG, LFIG…YAFF, YMVL…LLYA, LLVE…LSLV, PAPV…AVLL, LNEL…LLAL, IAHF…AVEA, IGVY…VITL, AVLT…GFIG, QLWW…FYYL, and IMLL…QPLL.

Belongs to the complex I subunit 2 family. In terms of assembly, NDH-1 is composed of 13 different subunits. Subunits NuoA, H, J, K, L, M, N constitute the membrane sector of the complex.

It is found in the cell inner membrane. It carries out the reaction a quinone + NADH + 5 H(+)(in) = a quinol + NAD(+) + 4 H(+)(out). NDH-1 shuttles electrons from NADH, via FMN and iron-sulfur (Fe-S) centers, to quinones in the respiratory chain. The immediate electron acceptor for the enzyme in this species is believed to be ubiquinone. Couples the redox reaction to proton translocation (for every two electrons transferred, four hydrogen ions are translocated across the cytoplasmic membrane), and thus conserves the redox energy in a proton gradient. This chain is NADH-quinone oxidoreductase subunit N, found in Ectopseudomonas mendocina (strain ymp) (Pseudomonas mendocina).